Consider the following 295-residue polypeptide: Thioredoxin-related transmembrane protein 2 (295 aa).

The first 48 residues, 1 to 48 (MAVLAPLIALVYSVPRLSRWLARPYCLLSALLSIAFLLVRKLPPICNG), serve as a signal peptide directing secretion. Topologically, residues 49-102 (LPTQREDGNPCDFDWREVEILMFLSAIVMMKNRRSITVEQHVGNIFMFSKVANA) are extracellular. A helical membrane pass occupies residues 103-125 (ILFFRLDIRMGLLYLTLCIVFLM). In terms of domain architecture, Thioredoxin spans 114 to 269 (LLYLTLCIVF…LYQRAKKLSK (156 aa)). Over 126 to 295 (TCKPPLYMGP…VPDGENKKDK (170 aa)) the chain is Cytoplasmic. Phosphoserine is present on residues serine 211 and serine 243. The segment at 266-295 (KLSKGGDMSEEKPGNPTPTAVPDGENKKDK) is disordered. The Di-lysine motif signature appears at 292–295 (KKDK).

As to quaternary structure, monomer. Homodimer; disulfide-linked. Occurs in both reduced and oxidized monomeric form. Oxidative conditions increase homodimerization. Interacts with CANX. Interacts with ATP2A2.

It localises to the endoplasmic reticulum membrane. The protein localises to the mitochondrion membrane. Its function is as follows. Endoplasmic reticulum and mitochondria-associated protein that probably functions as a regulator of cellular redox state and thereby regulates protein post-translational modification, protein folding and mitochondrial activity. Indirectly regulates neuronal proliferation, migration, and organization in the developing brain. This Rattus norvegicus (Rat) protein is Thioredoxin-related transmembrane protein 2 (Tmx2).